A 41-amino-acid chain; its full sequence is Pathogenesis-related protein (41 aa).

The protein belongs to the CRISP family.

Its function is as follows. Probably involved in the defense reaction of plants against pathogens. The sequence is that of Pathogenesis-related protein from Cucumis melo (Muskmelon).